The primary structure comprises 499 residues: Putative antiporter subunit mnhD2 (499 aa).

A run of 14 helical transmembrane segments spans residues 3-23 (SNLLVLPILLPLLCALVLVFT), 32-52 (ILYIGTMSVNTVISLCLLIYV), 78-98 (LSLVMVTVASFVVTLIMSYGF), 108-128 (YYLPTFILFLTTGVIGSFLTS), 130-150 (LFNLYVMFEIMLLASFVLVTL), 161-181 (IIYVVLNIVGSWLFLLGIGLL), 206-226 (IIIISIVFIVAFGSKAALVLF), 240-260 (LAALFAALMTKVGAYALIRFF), 273-293 (PLLVFMSCITMLIGAFGVIAY), 308-328 (IGFVILGLGSNTFAGVHGAIF), 330-350 (LANDIIVKTMLFFIIGSLVYM), 368-388 (FFGVAFVVMIFAIGGVPPFSG), 403-423 (GNFIGLALMIITSLLAMYSLF), and 450-470 (TILGILVAVVLAMGIAAPVVM).

The protein belongs to the CPA3 antiporters (TC 2.A.63) subunit D family. May form a heterooligomeric complex that consists of seven subunits: mnhA2, mnhB2, mnhC2, mnhD2, mnhE2, mnhF2 and mnhG2.

It is found in the cell membrane. This Staphylococcus haemolyticus (strain JCSC1435) protein is Putative antiporter subunit mnhD2 (mnhD2).